The chain runs to 151 residues: Probable chemoreceptor glutamine deamidase CheD (151 aa).

Belongs to the CheD family.

The enzyme catalyses L-glutaminyl-[protein] + H2O = L-glutamyl-[protein] + NH4(+). Its function is as follows. Probably deamidates glutamine residues to glutamate on methyl-accepting chemotaxis receptors (MCPs), playing an important role in chemotaxis. The protein is Probable chemoreceptor glutamine deamidase CheD of Methanosarcina barkeri (strain Fusaro / DSM 804).